Consider the following 62-residue polypeptide: Beta-defensin 110 (62 aa).

A signal peptide spans 1–21 (MKIHLFFFILLFWVTILPARS). Disulfide bonds link Cys-32/Cys-60, Cys-39/Cys-53, and Cys-43/Cys-61.

It belongs to the beta-defensin family.

Its subcellular location is the secreted. Has antibacterial activity. The protein is Beta-defensin 110 (DEFB110) of Canis lupus familiaris (Dog).